The chain runs to 141 residues: ATP synthase epsilon chain (141 aa).

It belongs to the ATPase epsilon chain family. In terms of assembly, F-type ATPases have 2 components, CF(1) - the catalytic core - and CF(0) - the membrane proton channel. CF(1) has five subunits: alpha(3), beta(3), gamma(1), delta(1), epsilon(1). CF(0) has three main subunits: a, b and c.

Its subcellular location is the cell inner membrane. Functionally, produces ATP from ADP in the presence of a proton gradient across the membrane. The protein is ATP synthase epsilon chain of Bordetella avium (strain 197N).